Consider the following 349-residue polypeptide: Phosphoribosylformylglycinamidine cyclo-ligase (349 aa).

The protein belongs to the AIR synthase family.

The protein localises to the cytoplasm. The enzyme catalyses 2-formamido-N(1)-(5-O-phospho-beta-D-ribosyl)acetamidine + ATP = 5-amino-1-(5-phospho-beta-D-ribosyl)imidazole + ADP + phosphate + H(+). The protein operates within purine metabolism; IMP biosynthesis via de novo pathway; 5-amino-1-(5-phospho-D-ribosyl)imidazole from N(2)-formyl-N(1)-(5-phospho-D-ribosyl)glycinamide: step 2/2. This Methanococcus maripaludis (strain C5 / ATCC BAA-1333) protein is Phosphoribosylformylglycinamidine cyclo-ligase.